We begin with the raw amino-acid sequence, 1593 residues long: Nischarin (1593 aa).

Residues 1 to 134 form a necessary for binding to phosphoinositide-3-P; not sufficient for targeting to endosomes region; that stretch reads MAAATLSFGP…GVTAALAEEL (134 aa). Residues 12-122 form the PX domain; that stretch reads REAEPAKEAR…AHFLHFHLYE (111 aa). The segment at 121-695 is necessary for homooligomerization and targeting to endosomes; sequence YEVNGVTAAL…ERLALEWALG (575 aa). The tract at residues 246–869 is interaction with PAK1; sequence MSVRFSATSM…LVYSDKRMVQ (624 aa). LRR repeat units follow at residues 290–311, 313–334, 335–356, 358–379, 380–401, and 405–426; these read ALTT…VKLI, KIEY…QHLY, NLVH…HTKL, NVKT…HKLY, SLVN…KSIG, and CLER…RTKV. A compositionally biased stretch (basic and acidic residues) spans 466 to 480; the sequence is SKLSNTEKKAGEDFR. Positions 466 to 499 are disordered; it reads SKLSNTEKKAGEDFRLPPAPCIRPGGSPPAAPAS. The span at 482-496 shows a compositional bias: pro residues; the sequence is PPAPCIRPGGSPPAA. Residues Ser543, Ser545, and Ser548 each carry the phosphoserine modification. Positions 624 to 694 form a coiled coil; sequence IEAANQREEA…EERLALEWAL (71 aa). The tract at residues 629–687 is disordered; that stretch reads QREEAHGEQGEEEEEEEEEEDVAENRYFEMGPPDAEEEEGSGQGEEDEEDEDEEAEEER. Composition is skewed to acidic residues over residues 638-650 and 662-685; these read GEEE…EEDV and DAEE…EAEE. The interaction with LIMK stretch occupies residues 661 to 869; that stretch reads PDAEEEEGSG…LVYSDKRMVQ (209 aa). The interaction with ITGA5 stretch occupies residues 709–807; it reads KVLWCFLIHV…ANLHEFHADL (99 aa). Residues 1016-1185 form a disordered region; it reads NPSAKPRNQP…PAGGPAPAEA (170 aa). Composition is skewed to low complexity over residues 1038–1069 and 1081–1158; these read ETPA…LAPV and AEAP…APAP. 10 consecutive repeat copies span residues 1081-1086, 1087-1092, 1093-1098, 1099-1104, 1105-1110, 1111-1116, 1123-1128, 1129-1134, 1135-1140, and 1141-1146. The tract at residues 1081-1146 is 10 X 6 AA tandem repeat of A-E-A-P-A-A; it reads AEAPAAAEAP…APAAAEAPAA (66 aa). Residues 1159-1179 are compositionally biased toward pro residues; that stretch reads NQAPAPARGPAPARGPAPAGG. A Phosphothreonine modification is found at Thr1371. Phosphoserine is present on Ser1373.

In terms of assembly, homooligomer. Interacts with GRB2. Interacts with PIK3R1; probably associates with the PI3-kinase complex. Interacts with IRS4. Found in a complex with ITGA5 and PAK1. Found in a complex with LIMK1 and PAK1. Interacts with ITGA5 (via cytoplasmic domain); this interaction is direct. Interacts with PAK1 (via kinase domain); this interaction is direct and is increased upon activation of PAK1. Interacts with LIMK1 (via PDZ and kinase domain); this interaction is direct. Interacts with LIMK2; this interaction depends on LIMK2 activity. Interacts with RAC1 (activated state). Interacts with STK11; this interaction may increase STK11 activity. In terms of tissue distribution, highly expressed in brain and kidney. Moderately expressed in heart, liver, lung and skeletal muscle. Not detected in spleen and testis.

Its subcellular location is the cell membrane. The protein resides in the cytoplasm. It is found in the early endosome. It localises to the recycling endosome. Functionally, acts either as the functional imidazoline-1 receptor (I1R) candidate or as a membrane-associated mediator of the I1R signaling. Binds numerous imidazoline ligands that induces initiation of cell-signaling cascades triggering to cell survival, growth and migration. Its activation by the agonist rilmenidine induces an increase in phosphorylation of mitogen-activated protein kinases MAPK1 and MAPK3 in rostral ventrolateral medulla (RVLM) neurons that exhibited rilmenidine-evoked hypotension. Blocking its activation with efaroxan abolished rilmenidine-induced mitogen-activated protein kinase phosphorylation in RVLM neurons. Acts as a modulator of Rac-regulated signal transduction pathways. Suppresses Rac1-stimulated cell migration by interacting with PAK1 and inhibiting its kinase activity. Also blocks Pak-independent Rac signaling by interacting with RAC1 and inhibiting Rac1-stimulated NF-kB response element and cyclin D1 promoter activation. Also inhibits LIMK1 kinase activity by reducing LIMK1 'Tyr-508' phosphorylation. Inhibits Rac-induced cell migration and invasion in breast and colon epithelial cells. Inhibits lamellipodia formation, when overexpressed. Plays a role in protection against apoptosis. Involved in association with IRS4 in the enhancement of insulin activation of MAPK1 and MAPK3. When overexpressed, induces a redistribution of cell surface ITGA5 integrin to intracellular endosomal structures. The protein is Nischarin (Nisch) of Mus musculus (Mouse).